Consider the following 221-residue polypeptide: Retinitis pigmentosa 9 protein (221 aa).

3 stretches are compositionally biased toward basic and acidic residues: residues 1–10, 17–29, and 60–69; these read MSSRPGREDV, RPRE…LQRR, and IKEDETKPED. The interval 1–76 is disordered; sequence MSSRPGREDV…PEDCIPDVPG (76 aa). A PIM1-binding region spans residues 1–155; it reads MSSRPGREDV…RDNKRHEKDV (155 aa). The segment at 104–122 adopts a CCHC-type zinc-finger fold; the sequence is QCWRCKRYGHRTGDKECPF. Residue K129 forms a Glycyl lysine isopeptide (Lys-Gly) (interchain with G-Cter in SUMO2) linkage. The span at 147–156 shows a compositional bias: basic and acidic residues; that stretch reads DNKRHEKDVR. A disordered region spans residues 147–221; the sequence is DNKRHEKDVR…SKSNEGSDSE (75 aa). Residues 184-212 are compositionally biased toward basic residues; sequence KHKKKKKKEKHKKRKKEKKKKKKRKHKSS. S212 and S214 each carry phosphoserine; by PIM1.

Binds to PIM1. Binds to ZNHIT4. As to expression, appears to be expressed in a wide range of tissues.

Its subcellular location is the nucleus. In terms of biological role, is thought to be a target protein for the PIM1 kinase. May play some roles in B-cell proliferation in association with PIM1. This is Retinitis pigmentosa 9 protein (RP9) from Homo sapiens (Human).